Reading from the N-terminus, the 375-residue chain is Queuine tRNA-ribosyltransferase (375 aa).

Aspartate 89 functions as the Proton acceptor in the catalytic mechanism. Residues 89–93, aspartate 143, glutamine 187, and glycine 214 contribute to the substrate site; that span reads DSGGF. The segment at 245-251 is RNA binding; sequence GVGKPED. Aspartate 264 serves as the catalytic Nucleophile. The segment at 269 to 273 is RNA binding; important for wobble base 34 recognition; that stretch reads TRNAR. The Zn(2+) site is built by cysteine 302, cysteine 304, cysteine 307, and histidine 333.

It belongs to the queuine tRNA-ribosyltransferase family. In terms of assembly, homodimer. Within each dimer, one monomer is responsible for RNA recognition and catalysis, while the other monomer binds to the replacement base PreQ1. It depends on Zn(2+) as a cofactor.

It carries out the reaction 7-aminomethyl-7-carbaguanine + guanosine(34) in tRNA = 7-aminomethyl-7-carbaguanosine(34) in tRNA + guanine. It functions in the pathway tRNA modification; tRNA-queuosine biosynthesis. Its function is as follows. Catalyzes the base-exchange of a guanine (G) residue with the queuine precursor 7-aminomethyl-7-deazaguanine (PreQ1) at position 34 (anticodon wobble position) in tRNAs with GU(N) anticodons (tRNA-Asp, -Asn, -His and -Tyr). Catalysis occurs through a double-displacement mechanism. The nucleophile active site attacks the C1' of nucleotide 34 to detach the guanine base from the RNA, forming a covalent enzyme-RNA intermediate. The proton acceptor active site deprotonates the incoming PreQ1, allowing a nucleophilic attack on the C1' of the ribose to form the product. After dissociation, two additional enzymatic reactions on the tRNA convert PreQ1 to queuine (Q), resulting in the hypermodified nucleoside queuosine (7-(((4,5-cis-dihydroxy-2-cyclopenten-1-yl)amino)methyl)-7-deazaguanosine). The polypeptide is Queuine tRNA-ribosyltransferase (Salmonella typhi).